The sequence spans 313 residues: MSPGSKRHISGVLLLDKASGLSSNQALQTAKRIFSAHKAGHTGTLDPMATGLLPICFGEATKFSSALLGADKTYEAVLRLGYMSTTGDAEGEISIAAGMESQYVDLTREKIEAVRKSFIGVITQVPPMYSAIKHRGKPMYTFARAGVEIERQPRAITIHDLSIEAYQGNEMRIRVTCGSGTYIRTLAEDLGHALGCGGAYLTALRRSALGGFDLPQAYTLTGLEAMPPSQRDSCLLPADSLLRSLPPVVVDSAAALSLLQGRAIPGTHPAGESLLPGRQVRLYDKAQRFLGLGEISTEGYISPKRLIRFEQSL.

The active-site Nucleophile is aspartate 46.

It belongs to the pseudouridine synthase TruB family. Type 1 subfamily.

It catalyses the reaction uridine(55) in tRNA = pseudouridine(55) in tRNA. Functionally, responsible for synthesis of pseudouridine from uracil-55 in the psi GC loop of transfer RNAs. This is tRNA pseudouridine synthase B from Nitrosospira multiformis (strain ATCC 25196 / NCIMB 11849 / C 71).